We begin with the raw amino-acid sequence, 227 residues long: Cytochrome c oxidase subunit 2 (227 aa).

The Mitochondrial intermembrane segment spans residues Met1 to Ser14. Residues Pro15 to Met45 traverse the membrane as a helical segment. The Mitochondrial matrix segment spans residues Leu46–Gln59. Residues Glu60–Met87 form a helical membrane-spanning segment. Over Asp88–Thr227 the chain is Mitochondrial intermembrane. Residues His161, Cys196, Glu198, Cys200, His204, and Met207 each coordinate Cu cation. Residue Glu198 coordinates Mg(2+). Phosphotyrosine is present on Tyr218.

Belongs to the cytochrome c oxidase subunit 2 family. In terms of assembly, component of the cytochrome c oxidase (complex IV, CIV), a multisubunit enzyme composed of 14 subunits. The complex is composed of a catalytic core of 3 subunits MT-CO1, MT-CO2 and MT-CO3, encoded in the mitochondrial DNA, and 11 supernumerary subunits COX4I, COX5A, COX5B, COX6A, COX6B, COX6C, COX7A, COX7B, COX7C, COX8 and NDUFA4, which are encoded in the nuclear genome. The complex exists as a monomer or a dimer and forms supercomplexes (SCs) in the inner mitochondrial membrane with NADH-ubiquinone oxidoreductase (complex I, CI) and ubiquinol-cytochrome c oxidoreductase (cytochrome b-c1 complex, complex III, CIII), resulting in different assemblies (supercomplex SCI(1)III(2)IV(1) and megacomplex MCI(2)III(2)IV(2)). Found in a complex with TMEM177, COA6, COX18, COX20, SCO1 and SCO2. Interacts with TMEM177 in a COX20-dependent manner. Interacts with COX20. Interacts with COX16. Cu cation serves as cofactor.

It localises to the mitochondrion inner membrane. The catalysed reaction is 4 Fe(II)-[cytochrome c] + O2 + 8 H(+)(in) = 4 Fe(III)-[cytochrome c] + 2 H2O + 4 H(+)(out). Functionally, component of the cytochrome c oxidase, the last enzyme in the mitochondrial electron transport chain which drives oxidative phosphorylation. The respiratory chain contains 3 multisubunit complexes succinate dehydrogenase (complex II, CII), ubiquinol-cytochrome c oxidoreductase (cytochrome b-c1 complex, complex III, CIII) and cytochrome c oxidase (complex IV, CIV), that cooperate to transfer electrons derived from NADH and succinate to molecular oxygen, creating an electrochemical gradient over the inner membrane that drives transmembrane transport and the ATP synthase. Cytochrome c oxidase is the component of the respiratory chain that catalyzes the reduction of oxygen to water. Electrons originating from reduced cytochrome c in the intermembrane space (IMS) are transferred via the dinuclear copper A center (CU(A)) of subunit 2 and heme A of subunit 1 to the active site in subunit 1, a binuclear center (BNC) formed by heme A3 and copper B (CU(B)). The BNC reduces molecular oxygen to 2 water molecules using 4 electrons from cytochrome c in the IMS and 4 protons from the mitochondrial matrix. This Carlito syrichta (Philippine tarsier) protein is Cytochrome c oxidase subunit 2 (MT-CO2).